The chain runs to 626 residues: DNA polymerase 2 (626 aa).

Belongs to the DNA polymerase type-B family.

The catalysed reaction is DNA(n) + a 2'-deoxyribonucleoside 5'-triphosphate = DNA(n+1) + diphosphate. This polymerase is devoid of exonuclease activity. This Saccharolobus solfataricus (strain ATCC 35092 / DSM 1617 / JCM 11322 / P2) (Sulfolobus solfataricus) protein is DNA polymerase 2 (dpo2).